The primary structure comprises 1303 residues: Endoplasmic reticulum transmembrane helix translocase spfA (1303 aa).

A run of 2 helical transmembrane segments spans residues 25-45 and 57-77; these read LHAY…VYLS and EWTF…WLMT. Positions 158–191 are A-domain; part 1; the sequence is KPPVKVFQQAQGLTSKEEIDRIQHHYGDNTFDIP. 2 consecutive transmembrane segments (helical) span residues 201 to 221 and 223 to 243; these read EHAV…WMLD and YWYY…TVVW. The A-domain; part 2 stretch occupies residues 256-408; sequence NIKPYDVWVY…LVRTMIYSTE (153 aa). Residue Asn-287 is glycosylated (N-linked (GlcNAc...) asparagine). Residues 415-435 form a helical membrane-spanning segment; that stretch reads VEALLFILFLLIFAIAAAWYV. The N-linked (GlcNAc...) asparagine glycan is linked to Asn-474. Residues 484–513 are P-domain; part 1; sequence AIFCTEPFRIPFAGRVDVACFDKTGTLTGE. Catalysis depends on Asp-505, which acts as the 4-aspartylphosphate intermediate. Residues Asp-505 and Thr-507 each contribute to the Mg(2+) site. An ATP-binding site is contributed by 505-507; sequence DKT. An N-domain region spans residues 515–721; it reads LVVDGIAGLT…FAGFLVLQCP (207 aa). Asn-589 carries an N-linked (GlcNAc...) asparagine glycan. Residues Phe-616 and Arg-678 each contribute to the ATP site. Residues 724-883 are P-domain; part 2; the sequence is EDAIKAVRML…HVGVALLNGS (160 aa). An N-linked (GlcNAc...) asparagine glycan is attached at Asn-734. Residues Asp-746 and 862–866 each bind ATP; that span reads DGTND. Asp-862 lines the Mg(2+) pocket. The segment at 884 to 1019 is arm-like; it reads PEDLAKIAEH…ELDDSEPPTI (136 aa). Residue Asn-958 is glycosylated (N-linked (GlcNAc...) asparagine). The interval 1020–1035 is P-domain; part 3; sequence KLGDASVAAPFTSKLA. The next 5 helical transmembrane spans lie at 1060-1080, 1082-1102, 1122-1142, 1201-1221, and 1239-1259; these read ILAL…LDGI, FGDG…LSIS, VYII…LIYL, AMYW…TEFI, and VTLT…ENVL. A disordered region spans residues 1277–1303; that stretch reads DQLQREMERKKQEELETQAEKERQRKV.

It belongs to the cation transport ATPase (P-type) (TC 3.A.3) family. Type V subfamily. The cofactor is Mg(2+).

Its subcellular location is the endoplasmic reticulum membrane. The enzyme catalyses [protein]-with a C-terminal TM segment(out) + ATP + H2O = [protein]-with a C-terminal TM segment(in) + ADP + phosphate + H(+). Its activity is regulated as follows. The ATPase activity is stimulated by phosphatidylinositol 4-phosphate (PI4P). Functionally, endoplasmic reticulum (ER) translocase required to remove mitochondrial transmembrane proteins mistargeted to the endoplasmic reticulum. Acts as a dislocase that mediates the ATP-dependent extraction of mislocalized mitochondrial transmembrane proteins from the endoplasmic reticulum membrane. Works in concert with the ER Ca(2+) pump srcA to support ER homeostasis. With srcA, also supports redox homeostasis and virulence. In Aspergillus fumigatus (strain ATCC MYA-4609 / CBS 101355 / FGSC A1100 / Af293) (Neosartorya fumigata), this protein is Endoplasmic reticulum transmembrane helix translocase spfA.